The sequence spans 248 residues: 1-(5-phosphoribosyl)-5-[(5-phosphoribosylamino)methylideneamino] imidazole-4-carboxamide isomerase (248 aa).

The active-site Proton acceptor is the D8. D129 acts as the Proton donor in catalysis.

The protein belongs to the HisA/HisF family.

It is found in the cytoplasm. The enzyme catalyses 1-(5-phospho-beta-D-ribosyl)-5-[(5-phospho-beta-D-ribosylamino)methylideneamino]imidazole-4-carboxamide = 5-[(5-phospho-1-deoxy-D-ribulos-1-ylimino)methylamino]-1-(5-phospho-beta-D-ribosyl)imidazole-4-carboxamide. It participates in amino-acid biosynthesis; L-histidine biosynthesis; L-histidine from 5-phospho-alpha-D-ribose 1-diphosphate: step 4/9. The sequence is that of 1-(5-phosphoribosyl)-5-[(5-phosphoribosylamino)methylideneamino] imidazole-4-carboxamide isomerase from Rhizobium leguminosarum bv. trifolii (strain WSM2304).